Here is an 893-residue protein sequence, read N- to C-terminus: Pentatricopeptide repeat-containing protein At5g52850, chloroplastic (893 aa).

PPR repeat units lie at residues N57–R87, T88–P122, N123–G157, N158–A188, D189–P223, N224–L257, N258–Q288, D289–P323, N324–D358, S359–P390, N391–P425, N426–G460, E461–R491, D492–M526, D527–G561, A562–P592, D593–P627, D628–I658, and Q664–K694. Residues I699–Q774 form a type E motif region. The tract at residues G775–K806 is type E(+) motif. The type DYW motif stretch occupies residues R807–V893.

It belongs to the PPR family. PCMP-H subfamily.

The protein resides in the plastid. Its subcellular location is the chloroplast. The sequence is that of Pentatricopeptide repeat-containing protein At5g52850, chloroplastic (PCMP-H31) from Arabidopsis thaliana (Mouse-ear cress).